The chain runs to 296 residues: 33 kDa chaperonin (296 aa).

2 disulfides stabilise this stretch: C238-C240 and C271-C274.

It belongs to the HSP33 family. In terms of processing, under oxidizing conditions two disulfide bonds are formed involving the reactive cysteines. Under reducing conditions zinc is bound to the reactive cysteines and the protein is inactive.

It localises to the cytoplasm. Redox regulated molecular chaperone. Protects both thermally unfolding and oxidatively damaged proteins from irreversible aggregation. Plays an important role in the bacterial defense system toward oxidative stress. This chain is 33 kDa chaperonin, found in Clostridium botulinum (strain ATCC 19397 / Type A).